The primary structure comprises 118 residues: MARIAGINIPDQKHAVIALTAIYGIGKTRAKAICAAAGIAEDVKIRELSEEQIDKLRDEVGKFTVEGDLRREVTLNIKRLLDLGCYRGLRHRRGLPVRGQRTKTNARTRKGPRKPIKK.

The tract at residues 94 to 118 (GLPVRGQRTKTNARTRKGPRKPIKK) is disordered.

It belongs to the universal ribosomal protein uS13 family. Part of the 30S ribosomal subunit. Forms a loose heterodimer with protein S19. Forms two bridges to the 50S subunit in the 70S ribosome.

Its function is as follows. Located at the top of the head of the 30S subunit, it contacts several helices of the 16S rRNA. In the 70S ribosome it contacts the 23S rRNA (bridge B1a) and protein L5 of the 50S subunit (bridge B1b), connecting the 2 subunits; these bridges are implicated in subunit movement. Contacts the tRNAs in the A and P-sites. This Histophilus somni (strain 129Pt) (Haemophilus somnus) protein is Small ribosomal subunit protein uS13.